We begin with the raw amino-acid sequence, 84 residues long: Conophysin-R (84 aa).

Intrachain disulfides connect Cys6/Cys46, Cys9/Cys20, Cys14/Cys36, Cys21/Cys26, Cys53/Cys71, Cys65/Cys83, and Cys72/Cys77.

Expressed by the venom duct.

The protein localises to the secreted. In terms of biological role, targets vasopressin-oxytocin related receptors. No effect observed when injected into goldfish or into mice. The protein is Conophysin-R of Conus radiatus (Rayed cone).